We begin with the raw amino-acid sequence, 241 residues long: uncharacterized protein (241 aa).

Residues 19 to 53 (KRIGYGMGEKSSAGSSRDQTYSVKPASDVKDKKKV) are disordered. The segment covering 30–39 (SAGSSRDQTY) has biased composition (polar residues).

This is an uncharacterized protein from Ostreid herpesvirus 1 (isolate France) (OsHV-1).